Here is a 148-residue protein sequence, read N- to C-terminus: C-C motif chemokine 2 (148 aa).

The signal sequence occupies residues 1–23 (MQVPVMLLGLLFTVAGWSIHVLA). Residue Q24 is modified to Pyrrolidone carboxylic acid. 2 disulfides stabilise this stretch: C34–C59 and C35–C75. N-linked (GlcNAc...) asparagine glycosylation is present at N126.

It belongs to the intercrine beta (chemokine CC) family. As to quaternary structure, monomer or homodimer; in equilibrium. Is tethered on endothelial cells by glycosaminoglycan (GAG) side chains of proteoglycans. Interacts with TNFAIP6 (via Link domain). In terms of processing, processing at the N-terminus can regulate receptor and target cell selectivity. Deletion of the N-terminal residue converts it from an activator of basophil to an eosinophil chemoattractant. N-Glycosylated.

The protein localises to the secreted. In terms of biological role, acts as a ligand for C-C chemokine receptor CCR2. Signals through binding and activation of CCR2 and induces a strong chemotactic response and mobilization of intracellular calcium ions. Exhibits a chemotactic activity for monocytes and basophils but not neutrophils or eosinophils. Plays an important role in mediating peripheral nerve injury-induced neuropathic pain. Increases NMDA-mediated synaptic transmission in both dopamine D1 and D2 receptor-containing neurons, which may be caused by MAPK/ERK-dependent phosphorylation of GRIN2B/NMDAR2B. The chain is C-C motif chemokine 2 (Ccl2) from Mus musculus (Mouse).